The chain runs to 1093 residues: MRKVSVLLFLAWVCFLFYAGIALFTSGFLLTRLELTNQSSCQELPGPGPLPWGSHGKPGACWMPSRFSRVVLVLIDALRFDFAQPQRSHVPGEPPVSVPFLGKLGSLQRILESQPHHGRLYRSQVDPPTTTMQRLKALTTGSLPTFIDAGSNFASHAIVEDNVIQQLNSAGRRVVFMGDDTWRDLFPGAFSQAFFFSSFNVRDLHTVDNGILEHLYPTLDGGSWDVLIAHFLGVDHCGHKHGPHHPEMAKKLSQMDQVIQGLIERLENDTLLVVAGDHGMTMNGDHGGDSELEVSAALFLYSPTALFPSVPPEEPEVIPQVSLVPTLALLLGLPIPFGNTGEVMAELFSGGSDSSHPHSSALAQVSALHINAQQVSRFLHTYSAATQDLQVKELHRLQTLFSKASARYQHFLRDPQEAEAALSTLTAEFQQFLRGARALCIESWARFSLVRMAGGAALLAAACLLCLLASQLAVAPGFLFRPLLLIPVAWGLTWTILYAGVSVTTGSKIDLVVLGAVAAAGSLLPFLWKAWVSRGSKRPLAPLLPVPRPVLILLLIRLATFFSDSFFVVEARATPFLLGSLVFFLVAQLHWEGQLLPPKPLTMSRLGSSAPTAPPRHSGAHALWLGIGLLLFTRLAGLFHRCPEETPACRSSPWLSPLASMVGGRAKNLWYGACVGALVALLVVVRLWLRRYGNLKSPEPPVLFVRWGMPLMVLGTAAYWALASGAEEAPPRLRALVAGASAVLPRAVMGLAALGLVLLLWRPVTVLVKAGAATSRTRTILTPFSGPPTSQADLDYVVPQIYRHMQEEFQGRLERTKAQGPITVAAYQLGSVYSAAMVTALLLLAFPLMLLHVERVSLVFLLLFLQSFLLLHLLAAGTPVATPGPFTVLWQAVSAWVLLATQTFYSTGHQPVFSAIHWHAAFVGFPDGHGSSTWLPALLVGANTFASHLLFAVGCPLLLLWPFLCERQGPKRRQPLPGSESEARVRPEEEEELQEPLMEVRLRDAPNHFNAALLQLGLKYLFILGAQILACALAASILRRHLMVWKVFAPKFIFEAVGFIVSSVGLLLGIALVMRVDVAVSSWFKKLVLAQQR.

The helical transmembrane segment at 4-24 (VSVLLFLAWVCFLFYAGIALF) threads the bilayer. Residue Asn-268 is glycosylated (N-linked (GlcNAc...) asparagine). 9 helical membrane-spanning segments follow: residues 460 to 480 (AAAC…GFLF), 483 to 503 (LLLI…GVSV), 512 to 532 (VVLG…KAWV), 669 to 689 (LWYG…RLWL), 702 to 722 (VLFV…YWAL), 748 to 768 (VMGL…TVLV), 831 to 851 (SVYS…LMLL), 856 to 876 (VSLV…LLAA), and 945 to 965 (FASH…PFLC). The interval 971–991 (KRRQPLPGSESEARVRPEEEE) is disordered. Helical transmembrane passes span 1018 to 1038 (LKYL…ASIL) and 1052 to 1072 (FIFE…GIAL).

The protein belongs to the PIGG/PIGN/PIGO family. PIGO subfamily. In terms of assembly, forms the ethanolamine phosphate transferase 3 complex composed by PIGO and PIGF. PIGF is required to stabilize PIGO.

It localises to the endoplasmic reticulum membrane. The protein operates within glycolipid biosynthesis; glycosylphosphatidylinositol-anchor biosynthesis. Its function is as follows. Catalytic subunit of the ethanolamine phosphate transferase 3 complex that transfers an ethanolamine phosphate (EtNP) from a phosphatidylethanolamine (PE) to the 6-OH position of the third alpha-1,2-linked mannose of the an alpha-D-Man-(1-&gt;2)-alpha-D-Man-(1-&gt;6)-2-PEtn-alpha-D-Man-(1-&gt;4)-alpha-D-GlcN-(1-&gt;6)-(1-radyl,2-acyl-sn-glycero-3-phospho)-2-acyl-inositol (also termed H6) intermediate to generate a 6-PEtn-alpha-D-Man-(1-&gt;2)-alpha-D-Man-(1-&gt;6)-2-PEtn-alpha-D-Man-(1-&gt;4)-alpha-D-GlcN-(1-&gt;6)-(1-radyl,2-acyl-sn-glycero-3-phospho)-2-acyl-inositol (also termed H7) and participates in the tenth step of the glycosylphosphatidylinositol-anchor biosynthesis. In Mus musculus (Mouse), this protein is GPI ethanolamine phosphate transferase 3, catalytic subunit.